Reading from the N-terminus, the 143-residue chain is MADVLFFEKPGCRNNTRQKALLIASGHRVEAHDIRQQPWTAETLRPYFGDKPVAQWINPAAPRVKAGEVRPEALDESEALALMVKDALLIRRPLMAVGQTKTCGFDRAAVNAWIGLIAQDPGDIETCPSQATNHRCAEEPGAA.

The active site involves Cys12.

Belongs to the ArsC family.

This is an uncharacterized protein from Rhodospirillum rubrum.